The following is a 511-amino-acid chain: GMP synthase [glutamine-hydrolyzing] (511 aa).

One can recognise a Glutamine amidotransferase type-1 domain in the interval 5 to 195; sequence AILVLDFGSQ…VFKICQAQIN (191 aa). The active-site Nucleophile is cysteine 82. Residues histidine 169 and glutamate 171 contribute to the active site. The region spanning 196–386 is the GMPS ATP-PPase domain; it reads WSLEGNLETI…LGIKKESLYR (191 aa). Residue 223-229 coordinates ATP; it reads SGGTDSL.

As to quaternary structure, homodimer.

The catalysed reaction is XMP + L-glutamine + ATP + H2O = GMP + L-glutamate + AMP + diphosphate + 2 H(+). It participates in purine metabolism; GMP biosynthesis; GMP from XMP (L-Gln route): step 1/1. Its function is as follows. Catalyzes the synthesis of GMP from XMP. This Borreliella burgdorferi (strain ATCC 35210 / DSM 4680 / CIP 102532 / B31) (Borrelia burgdorferi) protein is GMP synthase [glutamine-hydrolyzing] (guaA).